The following is a 456-amino-acid chain: MQLIEIKELLLSHSKREGEQVVLVGSFKSIRSSGAIGFIAFSDSTALEPVQIVFKKENTPNFDEISKLPISSMILVKGVVRNTPEKKQPFEIQASKIVVLKEADPSYPLQKKAHGSEFLRENAHLRVRTNKFYVIMKIRSELANAFFEFFKNNDFLYVHAPLITSNDSEGAGESFEVISPNDPNYFGKKASLTVSGQFAAEAYAQGFKRVFTFGPTFRAEKSHTSKHLSEFWMIEPEVSLMDLDKLTILIEQCVKHAIYYLFDYAKPELEWCNENLEPGLIDKLNNVINNDFPRVEYREVIEILKKAVAEGVEFEVKDIHFGMDLKSEHERYICEKVFKRPVFVINYPKDVKAFYMKLNDDNQTVAATDLLAPGIGEICGGSQREDSYNKLLTRCLELDIDPEFNNLQWYLDLRKYGYYRSAGFGLGFERLLMYVTGCDNIRDAIPFPRFHGQLDF.

The protein belongs to the class-II aminoacyl-tRNA synthetase family. In terms of assembly, homodimer.

It is found in the cytoplasm. It carries out the reaction tRNA(Asn) + L-asparagine + ATP = L-asparaginyl-tRNA(Asn) + AMP + diphosphate + H(+). The chain is Asparagine--tRNA ligase from Mycoplasmoides gallisepticum (strain R(low / passage 15 / clone 2)) (Mycoplasma gallisepticum).